A 512-amino-acid chain; its full sequence is Protein maph-9 (512 aa).

Disordered regions lie at residues 24–103 (ISRK…DDDF), 168–386 (DLSE…KNEK), and 481–512 (GNRL…RPFR). Low complexity-rich tracts occupy residues 30-39 (TTTTSSGSSG) and 78-95 (STLS…STAA). Over residues 178-200 (TDHEDPSLTFRVDKELEQSESKK) the composition is skewed to basic and acidic residues. Residues 230–239 (PQTSANLSTK) show a composition bias toward polar residues. 2 stretches are compositionally biased toward basic and acidic residues: residues 260-302 (KPSD…RENS) and 310-386 (VQDH…KNEK). Residues 267–429 (KEWLQKKERE…QLEESEKMTR (163 aa)) are a coiled coil. Over residues 502 to 512 (PGTTTSLRPFR) the composition is skewed to polar residues.

In terms of tissue distribution, expressed in amphid and phasmid ciliated neurons.

It localises to the cell projection. The protein localises to the cilium. Its subcellular location is the cytoplasm. The protein resides in the cytoskeleton. It is found in the cilium axoneme. In Caenorhabditis elegans, this protein is Protein maph-9.